We begin with the raw amino-acid sequence, 151 residues long: Small ribosomal subunit protein uS15 (151 aa).

This sequence belongs to the universal ribosomal protein uS15 family.

This chain is Small ribosomal subunit protein uS15 (RPS13), found in Wuchereria bancrofti.